We begin with the raw amino-acid sequence, 758 residues long: 5-methyltetrahydropteroyltriglutamate--homocysteine methyltransferase (758 aa).

5-methyltetrahydropteroyltri-L-glutamate-binding positions include 15–18 and K114; that span reads RELK. L-homocysteine contacts are provided by residues 433–435 and E486; that span reads IGS. L-methionine is bound by residues 433–435 and E486; that span reads IGS. Residues 517–518 and W563 contribute to the 5-methyltetrahydropteroyltri-L-glutamate site; that span reads RC. D601 is an L-homocysteine binding site. D601 serves as a coordination point for L-methionine. E607 serves as a coordination point for 5-methyltetrahydropteroyltri-L-glutamate. The Zn(2+) site is built by H643, C645, and E667. H696 serves as the catalytic Proton donor. C728 provides a ligand contact to Zn(2+).

It belongs to the vitamin-B12 independent methionine synthase family. The cofactor is Zn(2+).

It catalyses the reaction 5-methyltetrahydropteroyltri-L-glutamate + L-homocysteine = tetrahydropteroyltri-L-glutamate + L-methionine. It participates in amino-acid biosynthesis; L-methionine biosynthesis via de novo pathway; L-methionine from L-homocysteine (MetE route): step 1/1. Functionally, catalyzes the transfer of a methyl group from 5-methyltetrahydrofolate to homocysteine resulting in methionine formation. In Syntrophotalea carbinolica (strain DSM 2380 / NBRC 103641 / GraBd1) (Pelobacter carbinolicus), this protein is 5-methyltetrahydropteroyltriglutamate--homocysteine methyltransferase.